A 504-amino-acid polypeptide reads, in one-letter code: WD repeat-containing protein 55 homolog (504 aa).

Disordered regions lie at residues 1–21 (MDRHEHFKAPANEDELDDIDD) and 33–132 (QEVL…DDDD). Composition is skewed to acidic residues over residues 12–21 (NEDELDDIDD) and 33–48 (QEVLNESESDDDEYDL). The span at 63 to 74 (SSSNESISSDGS) shows a compositional bias: low complexity. Positions 78-89 (NAEDSDSDDSMI) are enriched in acidic residues. WD repeat units lie at residues 156–195 (KLEDFITDICFHPDRDIIALATIIGDVHLYEYGNEENKLL), 200–239 (VHAKACRDVEFTEDGRSLITCSKDKCVMVTDMETEKLKKL), 243–281 (AHDDAINKLHVLDERLFATGDDAGTVKLWDFRTKDAIFE), 284–323 (EVEDQITQMLTNEQNKLLLATSADGYLTTYNIGARKLYVQ), 326–365 (PYEEELNCMGIYRGSSKLVAGTSKGRLYTYNWGYFGYHCD), and 410–449 (QHNMPIESLDINCSGELLASSSHNNDVRFWNVKYFEDFGD). Residues 477–504 (FFADMTKDQDDDDNDGGNDTAAGPSNVT) are disordered.

Belongs to the WD repeat WDR55 family.

The sequence is that of WD repeat-containing protein 55 homolog from Drosophila virilis (Fruit fly).